Consider the following 52-residue polypeptide: uncharacterized protein (52 aa).

This is an uncharacterized protein from Homo sapiens (Human).